A 183-amino-acid polypeptide reads, in one-letter code: Ribosome rescue factor SmrB (183 aa).

Positions 98 to 173 constitute a Smr domain; that stretch reads LDLHGLTQLQ…GDAALLVLIE (76 aa).

This sequence belongs to the SmrB family. In terms of assembly, associates with collided ribosomes, but not with correctly translating polysomes.

In terms of biological role, acts as a ribosome collision sensor. Detects stalled/collided disomes (pairs of ribosomes where the leading ribosome is stalled and a second ribosome has collided with it) and endonucleolytically cleaves mRNA at the 5' boundary of the stalled ribosome. Stalled/collided disomes form a new interface (primarily via the 30S subunits) that binds SmrB. Cleaved mRNA becomes available for tmRNA ligation, leading to ribosomal subunit dissociation and rescue of stalled ribosomes. This is Ribosome rescue factor SmrB from Salmonella agona (strain SL483).